We begin with the raw amino-acid sequence, 256 residues long: Triosephosphate isomerase (256 aa).

12 to 14 lines the substrate pocket; the sequence is NWK. Catalysis depends on His-99, which acts as the Electrophile. Residue Glu-169 is the Proton acceptor of the active site. Substrate-binding positions include Gly-175, Ser-214, and 235–236; that span reads GG.

The protein belongs to the triosephosphate isomerase family. In terms of assembly, homodimer.

Its subcellular location is the cytoplasm. It catalyses the reaction D-glyceraldehyde 3-phosphate = dihydroxyacetone phosphate. The protein operates within carbohydrate biosynthesis; gluconeogenesis. It participates in carbohydrate degradation; glycolysis; D-glyceraldehyde 3-phosphate from glycerone phosphate: step 1/1. Functionally, involved in the gluconeogenesis. Catalyzes stereospecifically the conversion of dihydroxyacetone phosphate (DHAP) to D-glyceraldehyde-3-phosphate (G3P). This Rhizobium etli (strain ATCC 51251 / DSM 11541 / JCM 21823 / NBRC 15573 / CFN 42) protein is Triosephosphate isomerase.